We begin with the raw amino-acid sequence, 332 residues long: Glycerol-3-phosphate dehydrogenase [NAD(P)+] (332 aa).

NADPH contacts are provided by tryptophan 13, lysine 34, and lysine 108. Sn-glycerol 3-phosphate-binding residues include lysine 108, glycine 136, and serine 138. Position 140 (alanine 140) interacts with NADPH. Sn-glycerol 3-phosphate is bound by residues lysine 191, aspartate 244, serine 254, arginine 255, and asparagine 256. Catalysis depends on lysine 191, which acts as the Proton acceptor. Arginine 255 is an NADPH binding site. Residues valine 279 and glutamate 281 each coordinate NADPH.

It belongs to the NAD-dependent glycerol-3-phosphate dehydrogenase family.

It localises to the cytoplasm. The catalysed reaction is sn-glycerol 3-phosphate + NAD(+) = dihydroxyacetone phosphate + NADH + H(+). The enzyme catalyses sn-glycerol 3-phosphate + NADP(+) = dihydroxyacetone phosphate + NADPH + H(+). It participates in membrane lipid metabolism; glycerophospholipid metabolism. Catalyzes the reduction of the glycolytic intermediate dihydroxyacetone phosphate (DHAP) to sn-glycerol 3-phosphate (G3P), the key precursor for phospholipid synthesis. This is Glycerol-3-phosphate dehydrogenase [NAD(P)+] from Francisella tularensis subsp. holarctica (strain FTNF002-00 / FTA).